We begin with the raw amino-acid sequence, 166 residues long: Putative protein PTGES3L (166 aa).

Residues 46-154 (RQHARTLWYD…RPPPAMDDLD (109 aa)) form the CS domain. Residues 142–166 (STKRPPPAMDDLDDDSDSADDATSN) form a disordered region. Acidic residues predominate over residues 151–166 (DDLDDDSDSADDATSN).

Belongs to the p23/wos2 family.

This is Putative protein PTGES3L from Homo sapiens (Human).